A 974-amino-acid polypeptide reads, in one-letter code: UvrABC system protein A (974 aa).

34–41 provides a ligand contact to ATP; sequence GLSGSGKS. 2 ABC transporter domains span residues 331-610 and 630-959; these read WARS…TNSL and ISKT…QFLK. 663–670 is a binding site for ATP; it reads GVSGGGKS. A C4-type zinc finger spans residues 762-788; sequence CEACQGDGVIKIEMHFLPDVYVTCDVC.

This sequence belongs to the ABC transporter superfamily. UvrA family. In terms of assembly, forms a heterotetramer with UvrB during the search for lesions.

It localises to the cytoplasm. Its function is as follows. The UvrABC repair system catalyzes the recognition and processing of DNA lesions. UvrA is an ATPase and a DNA-binding protein. A damage recognition complex composed of 2 UvrA and 2 UvrB subunits scans DNA for abnormalities. When the presence of a lesion has been verified by UvrB, the UvrA molecules dissociate. The sequence is that of UvrABC system protein A from Brucella suis biovar 1 (strain 1330).